The sequence spans 412 residues: Proteasome-activating nucleotidase 2 (412 aa).

The stretch at 28 to 74 (LRQHFERMVDVNRELDQRLQNADDRHAELVDEVDQMKARNEALKTAS) forms a coiled coil. ATP is bound by residues 196-201 (GTGKTM) and H335. The tract at residues 409–412 (DYQY) is docks into pockets in the proteasome alpha-ring to cause gate opening.

Belongs to the AAA ATPase family. As to quaternary structure, homohexamer. The hexameric complex has a two-ring architecture resembling a top hat that caps the 20S proteasome core at one or both ends. Upon ATP-binding, the C-terminus of PAN interacts with the alpha-rings of the proteasome core by binding to the intersubunit pockets.

Its subcellular location is the cytoplasm. ATPase which is responsible for recognizing, binding, unfolding and translocation of substrate proteins into the archaeal 20S proteasome core particle. Is essential for opening the gate of the 20S proteasome via an interaction with its C-terminus, thereby allowing substrate entry and access to the site of proteolysis. Thus, the C-termini of the proteasomal ATPase function like a 'key in a lock' to induce gate opening and therefore regulate proteolysis. Unfolding activity requires energy from ATP hydrolysis, whereas ATP binding alone promotes ATPase-20S proteasome association which triggers gate opening, and supports translocation of unfolded substrates. The sequence is that of Proteasome-activating nucleotidase 2 from Haloferax volcanii (strain ATCC 29605 / DSM 3757 / JCM 8879 / NBRC 14742 / NCIMB 2012 / VKM B-1768 / DS2) (Halobacterium volcanii).